The following is a 318-amino-acid chain: Methionyl-tRNA formyltransferase (318 aa).

112–115 provides a ligand contact to (6S)-5,6,7,8-tetrahydrofolate; that stretch reads SILP.

This sequence belongs to the Fmt family.

The enzyme catalyses L-methionyl-tRNA(fMet) + (6R)-10-formyltetrahydrofolate = N-formyl-L-methionyl-tRNA(fMet) + (6S)-5,6,7,8-tetrahydrofolate + H(+). In terms of biological role, attaches a formyl group to the free amino group of methionyl-tRNA(fMet). The formyl group appears to play a dual role in the initiator identity of N-formylmethionyl-tRNA by promoting its recognition by IF2 and preventing the misappropriation of this tRNA by the elongation apparatus. The polypeptide is Methionyl-tRNA formyltransferase (Shewanella putrefaciens (strain CN-32 / ATCC BAA-453)).